The sequence spans 546 residues: Methionine--tRNA ligase (546 aa).

The 'HIGH' region motif lies at 15-25 (PYANGPIHLGH). The Zn(2+) site is built by cysteine 146, cysteine 149, cysteine 159, and cysteine 162. The short motif at 332 to 336 (KMSKS) is the 'KMSKS' region element. Lysine 335 contacts ATP.

This sequence belongs to the class-I aminoacyl-tRNA synthetase family. MetG type 1 subfamily. In terms of assembly, monomer. Zn(2+) is required as a cofactor.

The protein localises to the cytoplasm. The enzyme catalyses tRNA(Met) + L-methionine + ATP = L-methionyl-tRNA(Met) + AMP + diphosphate. Functionally, is required not only for elongation of protein synthesis but also for the initiation of all mRNA translation through initiator tRNA(fMet) aminoacylation. The protein is Methionine--tRNA ligase of Coxiella burnetii (strain Dugway 5J108-111).